The primary structure comprises 333 residues: Secreted mono- and diacylglycerol lipase 1 (333 aa).

An N-terminal signal peptide occupies residues 1–16 (MMLILSILSIIAFAAA). Cystine bridges form between cysteine 56–cysteine 268 and cysteine 276–cysteine 298. Serine 176 functions as the Nucleophile in the catalytic mechanism. Residues aspartate 230 and histidine 288 contribute to the active site.

Belongs to the AB hydrolase superfamily. Lipase family. Class 3 subfamily.

It is found in the secreted. It carries out the reaction a monoacylglycerol + H2O = glycerol + a fatty acid + H(+). The catalysed reaction is a diacylglycerol + H2O = a monoacylglycerol + a fatty acid + H(+). Its function is as follows. Secreted mono- and diacylglycerol lipase that allows the use of hydrolyzed lipids as carbon source and might play a role in pathogenicity. Shows lipolytic activity towards olive oil and p-nitrophenylpalmitate. This is Secreted mono- and diacylglycerol lipase 1 from Fusarium solani (Filamentous fungus).